The sequence spans 2197 residues: uncharacterized protein (2197 aa).

Ser-2 carries the N-acetylserine modification. Residues 2159–2195 form an HEAT repeat; the sequence is TIPFLAELLEDVELSVKSLAQDIIKQMEEMSGESLAE.

It belongs to the HEATR1/UTP10 family.

The protein resides in the nucleus. The protein localises to the nucleolus. Functionally, involved in nucleolar processing of pre-18S ribosomal RNA. Involved in ribosome biosynthesis. This is an uncharacterized protein from Arabidopsis thaliana (Mouse-ear cress).